Here is a 169-residue protein sequence, read N- to C-terminus: Ribosome maturation factor RimM (169 aa).

In terms of domain architecture, PRC barrel spans 97–169 (EDEYYWTDLV…TITADWGLDY (73 aa)).

The protein belongs to the RimM family. As to quaternary structure, binds ribosomal protein uS19.

The protein localises to the cytoplasm. In terms of biological role, an accessory protein needed during the final step in the assembly of 30S ribosomal subunit, possibly for assembly of the head region. Essential for efficient processing of 16S rRNA. May be needed both before and after RbfA during the maturation of 16S rRNA. It has affinity for free ribosomal 30S subunits but not for 70S ribosomes. The chain is Ribosome maturation factor RimM from Neisseria meningitidis serogroup B (strain ATCC BAA-335 / MC58).